We begin with the raw amino-acid sequence, 386 residues long: Acyl-[acyl-carrier-protein] dehydrogenase MbtN (386 aa).

Belongs to the acyl-CoA dehydrogenase family. FAD is required as a cofactor.

It functions in the pathway siderophore biosynthesis; mycobactin biosynthesis. Catalyzes the dehydrogenation at the alpha-beta position of ACP-bound acyl chains. This results in the introduction of a double bond in the lipidic chain, which is further transferred to the epsilon-amino group of lysine residue in the mycobactin core by MbtK. The sequence is that of Acyl-[acyl-carrier-protein] dehydrogenase MbtN (mbtN) from Mycobacterium bovis (strain ATCC BAA-935 / AF2122/97).